A 93-amino-acid polypeptide reads, in one-letter code: Guanine nucleotide-binding protein subunit gamma (93 aa).

The interval 1–22 (MPQYASRDVGDPSQIKKNKQSM) is disordered. The S-palmitoyl cysteine moiety is linked to residue Cys89. A Cysteine methyl ester modification is found at Cys90. Residue Cys90 is the site of S-farnesyl cysteine attachment. Residues 91–93 (VVM) constitute a propeptide, removed in mature form.

Belongs to the G protein gamma family. In terms of assembly, g proteins are composed of 3 units, alpha, beta and gamma.

The protein localises to the membrane. In Neurospora crassa (strain ATCC 24698 / 74-OR23-1A / CBS 708.71 / DSM 1257 / FGSC 987), this protein is Guanine nucleotide-binding protein subunit gamma (gng-1).